The primary structure comprises 355 residues: DNA polymerase IV (355 aa).

The UmuC domain maps to 7 to 188 (IIHIDMDCFY…LPVRKLFGVG (182 aa)). Mg(2+)-binding residues include Asp-11 and Asp-106. Residue Glu-107 is part of the active site.

Belongs to the DNA polymerase type-Y family. Monomer. The cofactor is Mg(2+).

It is found in the cytoplasm. It catalyses the reaction DNA(n) + a 2'-deoxyribonucleoside 5'-triphosphate = DNA(n+1) + diphosphate. In terms of biological role, poorly processive, error-prone DNA polymerase involved in untargeted mutagenesis. Copies undamaged DNA at stalled replication forks, which arise in vivo from mismatched or misaligned primer ends. These misaligned primers can be extended by PolIV. Exhibits no 3'-5' exonuclease (proofreading) activity. May be involved in translesional synthesis, in conjunction with the beta clamp from PolIII. The sequence is that of DNA polymerase IV from Legionella pneumophila subsp. pneumophila (strain Philadelphia 1 / ATCC 33152 / DSM 7513).